The following is a 1492-amino-acid chain: DNA polymerase alpha catalytic subunit (1492 aa).

Disordered stretches follow at residues 34–112 (DFIV…VEQS), 162–195 (SVTL…DVNP), and 210–234 (ANSY…EMAN). Positions 42–55 (YGYRDHGGEIWDRD) are enriched in basic and acidic residues. The span at 93–105 (NAASTNPSAQQKP) shows a compositional bias: polar residues. A compositionally biased stretch (basic and acidic residues) spans 166-178 (ESREEQERRRQSE). Polar residues-rich tracts occupy residues 184-194 (ANIGQNQSDVN) and 210-224 (ANSY…SVSK). Cys1314, Cys1317, Cys1341, Cys1344, Cys1375, Cys1380, Cys1393, and Cys1398 together coordinate Zn(2+). The CysA-type zinc-finger motif lies at 1314 to 1344 (CPHCAHNYHFPGILVPSSNNTELTGLACVKC). A CysB motif motif is present at residues 1375–1398 (CKEPQCGMKTNQLLLNNKCIVKGC).

Belongs to the DNA polymerase type-B family.

The protein resides in the nucleus. It carries out the reaction DNA(n) + a 2'-deoxyribonucleoside 5'-triphosphate = DNA(n+1) + diphosphate. Polymerase alpha in a complex with DNA primase is a replicative polymerase. The chain is DNA polymerase alpha catalytic subunit from Sterkiella nova (Ciliate).